A 293-amino-acid polypeptide reads, in one-letter code: Tumor necrosis factor receptor type 1-associated DEATH domain protein (293 aa).

A Nuclear export signal motif is present at residues 156–171 (LRDDEVTQLEQQLQNS). The region spanning 200 to 290 (TPADQQRFAA…SMAEIMLGIQ (91 aa)) is the Death domain. A Nuclear localization signal motif is present at residues 216–229 (KRVGRALQKNCRAL).

Heterodimer with tnfrsf1a.

It localises to the nucleus. The protein localises to the cytoplasm. The protein resides in the cytoskeleton. Adapter molecule for tnfrsf1a that specifically associates with the cytoplasmic domain of activated tnfrsf1a mediating its interaction with fadd. In Danio rerio (Zebrafish), this protein is Tumor necrosis factor receptor type 1-associated DEATH domain protein.